A 246-amino-acid chain; its full sequence is Phosducin (246 aa).

The segment covering 1-14 has biased composition (acidic residues); the sequence is MEEAKSQSLEEDFE. The disordered stretch occupies residues 1–70; the sequence is MEEAKSQSLE…GKDSKERVSR (70 aa). One can recognise a Phosducin domain in the interval 1-244; the sequence is MEEAKSQSLE…LEHTKIEEED (244 aa). Positions 60-69 are enriched in basic and acidic residues; it reads NGKDSKERVS. Ser73 carries the post-translational modification Phosphoserine; by PKA. Residues 111 to 246 are thioredoxin fold; sequence YGFVYELETG…HTKIEEEDVE (136 aa).

The protein belongs to the phosducin family. Forms a complex with the beta and gamma subunits of the GTP-binding protein, transducin. Interacts with CRX. In terms of processing, light-induced changes in cyclic nucleotide levels modulate the phosphorylation of this protein by cAMP kinase.

It localises to the cytoplasm. Its subcellular location is the cytosol. The protein localises to the nucleus. The protein resides in the cell projection. It is found in the cilium. It localises to the photoreceptor outer segment. Its subcellular location is the photoreceptor inner segment. In terms of biological role, may participate in the regulation of visual phototransduction or in the integration of photoreceptor metabolism. Inhibits the transcriptional activation activity of the cone-rod homeobox CRX. This is Phosducin (PDC) from Homo sapiens (Human).